The following is a 401-amino-acid chain: Elongation factor Tu, apicoplast (401 aa).

The tr-type G domain occupies 10–206 (KPHINIGTIG…ALDSYIPLPK (197 aa)). Positions 19–26 (GHVDHGKT) are G1. 19 to 26 (GHVDHGKT) provides a ligand contact to GTP. Threonine 26 is a binding site for Mg(2+). Positions 60–64 (GITIK) are G2. The interval 81 to 84 (DCPG) is G3. Residues 81–85 (DCPGH) and 136–139 (NKID) contribute to the GTP site. The segment at 136–139 (NKID) is G4. The segment at 173 to 175 (SAL) is G5.

The protein belongs to the TRAFAC class translation factor GTPase superfamily. Classic translation factor GTPase family. EF-Tu/EF-1A subfamily. As to quaternary structure, monomer.

The protein resides in the plastid. Its subcellular location is the apicoplast. It carries out the reaction GTP + H2O = GDP + phosphate + H(+). Its function is as follows. GTP hydrolase that promotes the GTP-dependent binding of aminoacyl-tRNA to the A-site of ribosomes during protein biosynthesis. The chain is Elongation factor Tu, apicoplast (tufA) from Toxoplasma gondii.